The sequence spans 238 residues: Probable septum site-determining protein MinC (238 aa).

Belongs to the MinC family. Interacts with MinD and FtsZ.

In terms of biological role, cell division inhibitor that blocks the formation of polar Z ring septums. Rapidly oscillates between the poles of the cell to destabilize FtsZ filaments that have formed before they mature into polar Z rings. Prevents FtsZ polymerization. This is Probable septum site-determining protein MinC from Xylella fastidiosa (strain M12).